The chain runs to 923 residues: Progesterone receptor (923 aa).

Positions 1 to 11 (MTELQAKDPRT) are enriched in basic and acidic residues. The disordered stretch occupies residues 1 to 49 (MTELQAKDPRTLHTSGAAPSPTHVGSPLLARLDPDPFQGSQHSDASSVV). An AF3; mediates transcriptional activation (in isoform B) region spans residues 1–164 (MTELQAKDPR…PATKGLLSPL (164 aa)). The segment at 1 to 556 (MTELQAKDPR…YGFDSLPQKI (556 aa)) is modulating, Pro-Rich. Residue Lys-7 forms a Glycyl lysine isopeptide (Lys-Gly) (interchain with G-Cter in SUMO) linkage. Residue Ser-20 is modified to Phosphoserine. A compositionally biased stretch (polar residues) spans 38–49 (QGSQHSDASSVV). The short motif at 56–60 (LDRLL) is the LXXL motif 1 element. The interval 67-111 (AQELPDEKTQNQQSLSDVEGAFSGVEASRRRSRNPRAPEKDSRLL) is disordered. Ser-82 carries the phosphoserine modification. The short motif at 115–119 (LDTLL) is the LXXL motif 2 element. Residues Ser-130 and Ser-162 each carry the phosphoserine modification. Residues 152 to 239 (RSVPATKGLL…EGSAGPLLKS (88 aa)) form a disordered region. The segment at 165-304 (MSRPESKAGD…LATTVVDFIH (140 aa)) is mediates transcriptional transrepression (in isoform A). A Nuclear localization signal motif is present at residues 184 to 188 (VLPKA). A phosphoserine mark is found at Ser-190 and Ser-213. A Phosphoserine; by MAPK1 modification is found at Ser-293. Residues 333–371 (AAQVPFAPPRGSPSAPSPPVPCGDFPDCTYPPEGDPKED) form a disordered region. Residues 338 to 353 (FAPPRGSPSAPSPPVP) show a composition bias toward pro residues. Ser-344 is subject to Phosphoserine; by MAPK. Lys-387 participates in a covalent cross-link: Glycyl lysine isopeptide (Lys-Gly) (interchain with G-Cter in SUMO); alternate. Lys-387 participates in a covalent cross-link: Glycyl lysine isopeptide (Lys-Gly) (interchain with G-Cter in ubiquitin); alternate. Residue Ser-399 is modified to Phosphoserine; by CDK2. The disordered stretch occupies residues 412 to 435 (TFPDFPLPPRPPRAPPSRPGEAAV). The segment covering 416 to 429 (FPLPPRPPRAPPSR) has biased composition (pro residues). Residues 450–536 (SALECILYKA…VYPPYLNYLR (87 aa)) are AF1; mediates transcriptional activation. Lys-521 participates in a covalent cross-link: Glycyl lysine isopeptide (Lys-Gly) (interchain with G-Cter in SUMO). NR C4-type zinc fingers lie at residues 557–577 (CLIC…CGSC) and 593–617 (CAGR…LRKC). The nuclear receptor DNA-binding region spans 557–629 (CLICGDEASG…AGMVLGGRKF (73 aa)). Phosphoserine is present on Ser-666. In terms of domain architecture, NR LBD spans 669-903 (QEIQLVPPLI…EFPEMMSEVI (235 aa)). The segment at 677–923 (LINLLMSIEP…MVKPLLFHKK (247 aa)) is AF2; mediates transcriptional activation. Progesterone is bound at residue Arg-756.

Belongs to the nuclear hormone receptor family. NR3 subfamily. As to quaternary structure, interacts with SMARD1 and UNC45A. Interacts with CUEDC2; the interaction promotes ubiquitination, decreases sumoylation, and represses transcriptional activity. Interacts with PIAS3; the interaction promotes sumoylation of PR in a hormone-dependent manner, inhibits DNA-binding, and alters nuclear export. Interacts with SP1; the interaction requires ligand-induced phosphorylation on Ser-344. Interacts with PRMT2. Isoform A interacts with NCOR2. Isoform B (but not isoform A) interacts with NCOA2 and NCOA1. Isoform B (but not isoform A) interacts with KLF9. Interacts with GTF2B. In terms of processing, phosphorylated on multiple serine sites. Several of these sites are hormone-dependent. Phosphorylation on Ser-293 is highly hormone-dependent and modulates ubiquitination and sumoylation on Lys-387. Phosphorylation on Ser-344 also requires induction by hormone. Basal phosphorylation on Ser-82, Ser-190 and Ser-399 is increased in response to progesterone and can be phosphorylated in vitro by the CDK2-A1 complex. Increased levels of phosphorylation on Ser-399 also in the presence of EGF, heregulin, IGF, PMA and FBS. Phosphorylation at this site by CDK2 is ligand-independent, and increases nuclear translocation and transcriptional activity. Phosphorylation at Ser-293, but not at Ser-190, is impaired during the G(2)/M phase of the cell cycle. Phosphorylation on Ser-344 by ERK1/2 MAPK is required for interaction with SP1. Post-translationally, sumoylation is hormone-dependent and represses transcriptional activity. Sumoylation on all three sites is enhanced by PIAS3. Desumoylated by SENP1. Sumoylation on Lys-387, the main site of sumoylation, is repressed by ubiquitination on the same site, and modulated by phosphorylation at Ser-293. Ubiquitination is hormone-dependent and represses sumoylation on the same site. Promoted by MAPK-mediated phosphorylation on Ser-293. Ubiquitinated by UBR5, leading to its degradation: UBR5 specifically recognizes and binds ligand-bound PGR when it is not associated with coactivators (NCOAs). In presence of NCOAs, the UBR5-degron is not accessible, preventing its ubiquitination and degradation. In terms of processing, palmitoylated by ZDHHC7 and ZDHHC21. Palmitoylation is required for plasma membrane targeting and for rapid intracellular signaling via ERK and AKT kinases and cAMP generation. As to expression, isoform A and isoform B are expressed in the pituitary.

The protein localises to the nucleus. Its subcellular location is the cytoplasm. In terms of biological role, the steroid hormones and their receptors are involved in the regulation of eukaryotic gene expression and affect cellular proliferation and differentiation in target tissues. Depending on the isoform, progesterone receptor functions as a transcriptional activator or repressor. Its function is as follows. Ligand-dependent transdominant repressor of steroid hormone receptor transcriptional activity including repression of its isoform B, MR and ER. Transrepressional activity may involve recruitment of corepressor NCOR2. Transcriptional activator of several progesteron-dependent promoters in a variety of cell types. Involved in activation of SRC-dependent MAPK signaling on hormone stimulation. The chain is Progesterone receptor (Pgr) from Rattus norvegicus (Rat).